The primary structure comprises 355 residues: Fructose-1,6-bisphosphatase class 1 (355 aa).

Mg(2+)-binding residues include Glu94, Asp116, Leu118, and Asp119. Substrate-binding positions include 119 to 122 (DGSS), Asn211, and 263 to 265 (YLY). Mg(2+) is bound at residue Glu283.

This sequence belongs to the FBPase class 1 family. In terms of assembly, homotetramer. The cofactor is Mg(2+).

The protein resides in the cytoplasm. The enzyme catalyses beta-D-fructose 1,6-bisphosphate + H2O = beta-D-fructose 6-phosphate + phosphate. It participates in carbohydrate biosynthesis; Calvin cycle. The chain is Fructose-1,6-bisphosphatase class 1 from Rhodospirillum rubrum (strain ATCC 11170 / ATH 1.1.1 / DSM 467 / LMG 4362 / NCIMB 8255 / S1).